A 436-amino-acid polypeptide reads, in one-letter code: UPF0597 protein YhaM (436 aa).

Belongs to the UPF0597 family.

The polypeptide is UPF0597 protein YhaM (Shigella sonnei (strain Ss046)).